The primary structure comprises 75 residues: UPF0270 protein PSPPH_1506 (75 aa).

The protein belongs to the UPF0270 family.

This chain is UPF0270 protein PSPPH_1506, found in Pseudomonas savastanoi pv. phaseolicola (strain 1448A / Race 6) (Pseudomonas syringae pv. phaseolicola (strain 1448A / Race 6)).